A 491-amino-acid chain; its full sequence is Putative F-box/LRR-repeat protein At3g59230 (491 aa).

One can recognise an F-box domain in the interval 11 to 57 (KDIINSLPEALIYHILSFLSTKEAAITSLLSRKWRYFFAFVPNLDFD). LRR repeat units follow at residues 127–154 (LSIASDTTYLFPSKVFVSKSLVRLRIEA), 156–182 (NGLAFGSLVIDVGDVSLPKLKTLYLDS), 184–209 (ELDYQIICLAKLLSGCHVLEELVMID), 325–351 (ASTVEVLTFRCKAIPIFNNLTRLTIES), 352–377 (NTKVGWDSLPNLLKNCPNLKTLVFQG), 419–444 (NDKTELEQTKHFLELMPHLEQLNIYY), and 472–491 (VQVISDNLTLSVTLPSSSSI).

This chain is Putative F-box/LRR-repeat protein At3g59230, found in Arabidopsis thaliana (Mouse-ear cress).